Reading from the N-terminus, the 186-residue chain is Ribosome-recycling factor (186 aa).

Belongs to the RRF family.

The protein resides in the cytoplasm. Functionally, responsible for the release of ribosomes from messenger RNA at the termination of protein biosynthesis. May increase the efficiency of translation by recycling ribosomes from one round of translation to another. The protein is Ribosome-recycling factor of Bordetella parapertussis (strain 12822 / ATCC BAA-587 / NCTC 13253).